Here is a 251-residue protein sequence, read N- to C-terminus: Hydroxyacylglutathione hydrolase (251 aa).

Zn(2+)-binding residues include His53, His55, Asp57, His58, His110, Asp127, and His165.

Belongs to the metallo-beta-lactamase superfamily. Glyoxalase II family. As to quaternary structure, monomer. Requires Zn(2+) as cofactor.

It carries out the reaction an S-(2-hydroxyacyl)glutathione + H2O = a 2-hydroxy carboxylate + glutathione + H(+). It functions in the pathway secondary metabolite metabolism; methylglyoxal degradation; (R)-lactate from methylglyoxal: step 2/2. Thiolesterase that catalyzes the hydrolysis of S-D-lactoyl-glutathione to form glutathione and D-lactic acid. In Salmonella dublin (strain CT_02021853), this protein is Hydroxyacylglutathione hydrolase.